Reading from the N-terminus, the 205-residue chain is GTP cyclohydrolase 1 (205 aa).

The Zn(2+) site is built by cysteine 94, histidine 97, and cysteine 165.

Belongs to the GTP cyclohydrolase I family. As to quaternary structure, toroid-shaped homodecamer, composed of two pentamers of five dimers.

It carries out the reaction GTP + H2O = 7,8-dihydroneopterin 3'-triphosphate + formate + H(+). It functions in the pathway cofactor biosynthesis; 7,8-dihydroneopterin triphosphate biosynthesis; 7,8-dihydroneopterin triphosphate from GTP: step 1/1. This chain is GTP cyclohydrolase 1, found in Sinorhizobium medicae (strain WSM419) (Ensifer medicae).